The sequence spans 204 residues: Probable nicotinate-nucleotide adenylyltransferase (204 aa).

Belongs to the NadD family.

It catalyses the reaction nicotinate beta-D-ribonucleotide + ATP + H(+) = deamido-NAD(+) + diphosphate. It functions in the pathway cofactor biosynthesis; NAD(+) biosynthesis; deamido-NAD(+) from nicotinate D-ribonucleotide: step 1/1. In terms of biological role, catalyzes the reversible adenylation of nicotinate mononucleotide (NaMN) to nicotinic acid adenine dinucleotide (NaAD). This chain is Probable nicotinate-nucleotide adenylyltransferase, found in Methylacidiphilum infernorum (isolate V4) (Methylokorus infernorum (strain V4)).